The primary structure comprises 1574 residues: Pentafunctional AROM polypeptide (1574 aa).

The 3-dehydroquinate synthase stretch occupies residues 1–384 (MSCSNNTEPT…HEPRATTVED (384 aa)). NAD(+) is bound by residues 49 to 51 (DTN), 85 to 88 (EISK), 116 to 118 (GGV), and Asp-121. Arg-132 contacts 7-phospho-2-dehydro-3-deoxy-D-arabino-heptonate. 141–142 (TT) lines the NAD(+) pocket. Asp-148 and Lys-154 together coordinate 7-phospho-2-dehydro-3-deoxy-D-arabino-heptonate. Position 163 (Lys-163) interacts with NAD(+). Asn-164 contributes to the 7-phospho-2-dehydro-3-deoxy-D-arabino-heptonate binding site. Residues 181–184 (FLET) and Asn-192 contribute to the NAD(+) site. Residue Glu-196 participates in Zn(2+) binding. 7-phospho-2-dehydro-3-deoxy-D-arabino-heptonate-binding positions include 196–199 (EVIK) and Lys-250. Glu-260 acts as the Proton acceptor; for 3-dehydroquinate synthase activity in catalysis. 7-phospho-2-dehydro-3-deoxy-D-arabino-heptonate-binding positions include 264-268 (RNLLN) and His-271. His-271 contributes to the Zn(2+) binding site. His-275 (proton acceptor; for 3-dehydroquinate synthase activity) is an active-site residue. The 7-phospho-2-dehydro-3-deoxy-D-arabino-heptonate site is built by His-287 and Lys-356. His-287 is a binding site for Zn(2+). Positions 397–837 (ITPGVSTKLA…WDTLSQSFGL (441 aa)) are EPSP synthase. Catalysis depends on Cys-819, which acts as the For EPSP synthase activity. The tract at residues 858 to 1052 (TRSVFIVGMR…TAKEQSFFVS (195 aa)) is shikimate kinase. 865–872 (GMRGAGKT) contributes to the ATP binding site. A 3-dehydroquinase region spans residues 1053–1266 (LTVPSVDSAV…AAPGQLSAAE (214 aa)). Catalysis depends on His-1169, which acts as the Proton acceptor; for 3-dehydroquinate dehydratase activity. The active-site Schiff-base intermediate with substrate; for 3-dehydroquinate dehydratase activity is Lys-1197. The tract at residues 1279 to 1574 (AQSFHLFGKP…NGDEIPTSTD (296 aa)) is shikimate dehydrogenase.

This sequence in the N-terminal section; belongs to the sugar phosphate cyclases superfamily. Dehydroquinate synthase family. It in the 2nd section; belongs to the EPSP synthase family. In the 3rd section; belongs to the shikimate kinase family. The protein in the 4th section; belongs to the type-I 3-dehydroquinase family. This sequence in the C-terminal section; belongs to the shikimate dehydrogenase family. Homodimer. The cofactor is Zn(2+).

The protein resides in the cytoplasm. It catalyses the reaction 7-phospho-2-dehydro-3-deoxy-D-arabino-heptonate = 3-dehydroquinate + phosphate. The enzyme catalyses 3-dehydroquinate = 3-dehydroshikimate + H2O. The catalysed reaction is shikimate + NADP(+) = 3-dehydroshikimate + NADPH + H(+). It carries out the reaction shikimate + ATP = 3-phosphoshikimate + ADP + H(+). It catalyses the reaction 3-phosphoshikimate + phosphoenolpyruvate = 5-O-(1-carboxyvinyl)-3-phosphoshikimate + phosphate. It participates in metabolic intermediate biosynthesis; chorismate biosynthesis; chorismate from D-erythrose 4-phosphate and phosphoenolpyruvate: step 2/7. Its pathway is metabolic intermediate biosynthesis; chorismate biosynthesis; chorismate from D-erythrose 4-phosphate and phosphoenolpyruvate: step 3/7. It functions in the pathway metabolic intermediate biosynthesis; chorismate biosynthesis; chorismate from D-erythrose 4-phosphate and phosphoenolpyruvate: step 4/7. The protein operates within metabolic intermediate biosynthesis; chorismate biosynthesis; chorismate from D-erythrose 4-phosphate and phosphoenolpyruvate: step 5/7. It participates in metabolic intermediate biosynthesis; chorismate biosynthesis; chorismate from D-erythrose 4-phosphate and phosphoenolpyruvate: step 6/7. The AROM polypeptide catalyzes 5 consecutive enzymatic reactions in prechorismate polyaromatic amino acid biosynthesis. In Verticillium alfalfae (strain VaMs.102 / ATCC MYA-4576 / FGSC 10136) (Verticillium wilt of alfalfa), this protein is Pentafunctional AROM polypeptide.